A 112-amino-acid polypeptide reads, in one-letter code: Conotoxin vil14.4 (112 aa).

The first 22 residues, 1-22, serve as a signal peptide directing secretion; the sequence is MGFRVLVLVVMATTSALPFTFF. Residues 23 to 85 constitute a propeptide that is removed on maturation; the sequence is EEPGRSPFRP…FAELSVGQRR (63 aa). 2 disulfides stabilise this stretch: cysteine 91-cysteine 111 and cysteine 95-cysteine 107.

The protein belongs to the conotoxin R superfamily. In terms of tissue distribution, expressed by the venom duct.

It localises to the secreted. This chain is Conotoxin vil14.4, found in Conus villepinii (Villepin's cone).